Reading from the N-terminus, the 366-residue chain is Polyprenyl transferase AOL_s00215g276 (366 aa).

Residues 1-22 (MESIIARPRTRSSAKEKTQTMS) form a disordered region. 7 helical membrane-spanning segments follow: residues 53 to 73 (LHTL…CLSA), 85 to 105 (FLSV…AFCT), 137 to 157 (IIAF…TLGF), 160 to 180 (ALVC…KRVV), 185 to 205 (LVLG…VAGN), 212 to 232 (AVPM…IYAT), and 253 to 273 (HMHQ…SFTA). The N-linked (GlcNAc...) asparagine glycan is linked to asparagine 277. A run of 2 helical transmembrane segments spans residues 281–301 (LFWS…LLSL) and 312–332 (VFLM…IELW). N-linked (GlcNAc...) asparagine glycosylation occurs at asparagine 352.

Belongs to the UbiA prenyltransferase family. The cofactor is Mg(2+).

It localises to the membrane. It functions in the pathway secondary metabolite biosynthesis; terpenoid biosynthesis. Polyprenyl transferase; part of the gene cluster that mediates the biosynthesis of sesquiterpenyl epoxy-cyclohexenoids (SECs) such as anthrobotrisins and arthrosporols, metabolites that possess a novel hybrid carbon skeleton consisting of a polyketide-derived epoxycyclohexenol combined with a terpenoid-derived monocyclic sesquiterpenol substructure (PKS-PTS hybrid). The SEC pathway plays an important role for fungal soil colonization via decreasing fungal nematode-capturing ability. Within the pathway, the polyprenyl transferase catalyzes the farnesylation of toluquinol to yield farnesyl hydroquinone, the first hybrid precursor for biosynthesis of SECs, and farnesyl quinone (34) might be the key precursor for the epoxy ring formation. The pathway begins with the biosynthesis of 6-methylsalicylic acid (6-MSA), the first precursor of the polyketide-derived epoxycyclohexenol in arthrosporols, by the polyketide synthase (PKS) AOL_s00215g283 via condensation of 1 acetate and 3 malonate units. The 6-methylsalicylic acid decarboxylase AOL_s00215g281 then catalyzes the decarboxylation of 6-methylsalicylic acid to yield m-cresol. The cytochrome P450 monooxygenase AOL_s00215g282 further oxidizes m-cresol to yield toluquinol. With the assistance of the oxidoreductase AOL_s00215g277, the polyprenyl transferase AOL_s00215g276 catalyzes the farnesylation of toluquinol to produce farnesyl hydroquinone, the hybrid precursor for biosynthesis of SECs. Farnesyl hydroquinone undergoes epoxidation and then subsequent dehydrogenation to form farnesyl epoxy-quinone, the first and simplest SEC. The cytochrome P450 monooxygenase AOL_s00215g278 and the FAD-dependent monooxygenase AOL_s00215g279 might be involved in the oxygenation of the phenol moiety, most likely in the epoxy formation. The cytochrome P450 monooxygenases AOL_s00215g274 and AOL_s00215g280 are involved in specific regional ketone reductions at respectively C-4 and C-1 of farnesyl epoxy-quinone PubMed:33823587. This chain is Polyprenyl transferase AOL_s00215g276, found in Arthrobotrys oligospora (strain ATCC 24927 / CBS 115.81 / DSM 1491) (Nematode-trapping fungus).